Reading from the N-terminus, the 425-residue chain is Glutamyl-tRNA reductase (425 aa).

Substrate contacts are provided by residues 49–52 (TCNR), Ser107, 112–114 (EPQ), and Gln118. Catalysis depends on Cys50, which acts as the Nucleophile. Residue 187–192 (GAGETI) coordinates NADP(+).

It belongs to the glutamyl-tRNA reductase family. In terms of assembly, homodimer.

It catalyses the reaction (S)-4-amino-5-oxopentanoate + tRNA(Glu) + NADP(+) = L-glutamyl-tRNA(Glu) + NADPH + H(+). It participates in porphyrin-containing compound metabolism; protoporphyrin-IX biosynthesis; 5-aminolevulinate from L-glutamyl-tRNA(Glu): step 1/2. Its function is as follows. Catalyzes the NADPH-dependent reduction of glutamyl-tRNA(Glu) to glutamate 1-semialdehyde (GSA). The polypeptide is Glutamyl-tRNA reductase (Pseudomonas putida (strain ATCC 700007 / DSM 6899 / JCM 31910 / BCRC 17059 / LMG 24140 / F1)).